Consider the following 323-residue polypeptide: DNA-directed RNA polymerase subunit alpha (323 aa).

The tract at residues 1–225 (MLDIAMPKIE…QYSQTIADFN (225 aa)) is alpha N-terminal domain (alpha-NTD). Positions 246–323 (IYDTPIEELD…SHAARAEIEG (78 aa)) are alpha C-terminal domain (alpha-CTD).

The protein belongs to the RNA polymerase alpha chain family. In terms of assembly, homodimer. The RNAP catalytic core consists of 2 alpha, 1 beta, 1 beta' and 1 omega subunit. When a sigma factor is associated with the core the holoenzyme is formed, which can initiate transcription.

It catalyses the reaction RNA(n) + a ribonucleoside 5'-triphosphate = RNA(n+1) + diphosphate. Its function is as follows. DNA-dependent RNA polymerase catalyzes the transcription of DNA into RNA using the four ribonucleoside triphosphates as substrates. This is DNA-directed RNA polymerase subunit alpha from Roseiflexus sp. (strain RS-1).